The following is a 193-amino-acid chain: Dual-action ribosomal maturation protein DarP (193 aa).

The segment covering M1–E10 has biased composition (basic and acidic residues). Disordered regions lie at residues M1–R20 and Q171–E193. Residues G181 to E193 show a composition bias toward acidic residues.

This sequence belongs to the DarP family.

The protein localises to the cytoplasm. Member of a network of 50S ribosomal subunit biogenesis factors which assembles along the 30S-50S interface, preventing incorrect 23S rRNA structures from forming. Promotes peptidyl transferase center (PTC) maturation. The protein is Dual-action ribosomal maturation protein DarP of Xanthomonas oryzae pv. oryzae (strain KACC10331 / KXO85).